A 480-amino-acid chain; its full sequence is Dimethyl-sulfide monooxygenase (480 aa).

Asp58, Thr104, His154, Tyr158, and Ser230 together coordinate FMN. The disordered stretch occupies residues 423-480 (QDSYKPGSLRRKLIGTNDGRVESTHPAAQYRDAYVGKESVADRTQPSPFANAKAPVAE).

This sequence belongs to the NtaA/SnaA/DszA monooxygenase family. Heterodimer of 2 subunits, DmoA and DmoB. The cofactor is FMN.

The enzyme catalyses dimethyl sulfide + NADH + O2 + H(+) = methanethiol + formaldehyde + NAD(+) + H2O. Inhibited by umbelliferone, 8-anilinonaphthalenesulfonate, a range of metal-chelating agents, and Hg(2+), Cd(2+) and Pb(2+) ions. Monooxygenase that mediates oxidation of dimethyl sulfide, the first step in dimethyl sulfide degradation pathway. Has much lower activity with diethyl sulfide and other short-chain alkyl methyl sulfides. The protein is Dimethyl-sulfide monooxygenase (dmoA) of Hyphomicrobium sulfonivorans.